Here is a 472-residue protein sequence, read N- to C-terminus: Adenosylhomocysteinase (472 aa).

Positions 62, 137, and 197 each coordinate substrate. Position 198-200 (198-200) interacts with NAD(+); sequence TTT. Lys-227 and Asp-231 together coordinate substrate. NAD(+) is bound by residues Asn-232, 261–266, Glu-284, Asn-319, 340–342, and Asn-385; these read GYGDVG and IGH.

Belongs to the adenosylhomocysteinase family. Requires NAD(+) as cofactor.

It is found in the cytoplasm. The enzyme catalyses S-adenosyl-L-homocysteine + H2O = L-homocysteine + adenosine. The protein operates within amino-acid biosynthesis; L-homocysteine biosynthesis; L-homocysteine from S-adenosyl-L-homocysteine: step 1/1. Its function is as follows. May play a key role in the regulation of the intracellular concentration of adenosylhomocysteine. The chain is Adenosylhomocysteinase from Bordetella pertussis (strain Tohama I / ATCC BAA-589 / NCTC 13251).